The primary structure comprises 650 residues: Fructose-1,6-bisphosphatase class 3 (650 aa).

This sequence belongs to the FBPase class 3 family. It depends on Mn(2+) as a cofactor.

The enzyme catalyses beta-D-fructose 1,6-bisphosphate + H2O = beta-D-fructose 6-phosphate + phosphate. It functions in the pathway carbohydrate biosynthesis; gluconeogenesis. In Staphylococcus saprophyticus subsp. saprophyticus (strain ATCC 15305 / DSM 20229 / NCIMB 8711 / NCTC 7292 / S-41), this protein is Fructose-1,6-bisphosphatase class 3.